Reading from the N-terminus, the 468-residue chain is Mitochondrial dynamics protein MID51 (468 aa).

Topologically, residues 1-29 (MAGVNGDRKGKKDDNGLGTAIDFVLSNAK) are mitochondrial intermembrane. A helical membrane pass occupies residues 30 to 47 (LVLGVGGAAMLGIATLAV). The Cytoplasmic segment spans residues 48-468 (KRMYDRALSA…SDPESLLRTV (421 aa)). Residues 50–196 (MYDRALSAPS…LSGSLYDDLQ (147 aa)) form a dimerization region. The disordered stretch occupies residues 56–123 (SAPSSPTKAD…RGLARGGRPA (68 aa)). The span at 91–108 (QNVSRSLQTLPTSSSSFK) shows a compositional bias: polar residues. Residues 161 to 170 (AALDICAELR) are important for interaction with DNM1L. ADP contacts are provided by S188, S190, and H202. Positions 235-244 (RRENLEYFPR) are important for interaction with DNM1L. ADP-binding residues include S344, R346, and K372.

It belongs to the MID49/MID51 family. In terms of assembly, homodimer.

Its subcellular location is the mitochondrion outer membrane. Its function is as follows. Mitochondrial outer membrane protein which regulates mitochondrial fission/fusion dynamics. Promotes the recruitment and association of the fission mediator dynamin-related protein 1 (DNM1L) to the mitochondrial surface independently of the mitochondrial fission FIS1 and MFF proteins. Regulates DNM1L GTPase activity and DNM1L oligomerization. The protein is Mitochondrial dynamics protein MID51 (mief1) of Danio rerio (Zebrafish).